The primary structure comprises 60 residues: Large ribosomal subunit protein uL30 (60 aa).

The protein belongs to the universal ribosomal protein uL30 family. As to quaternary structure, part of the 50S ribosomal subunit.

The chain is Large ribosomal subunit protein uL30 from Salinispora tropica (strain ATCC BAA-916 / DSM 44818 / JCM 13857 / NBRC 105044 / CNB-440).